A 326-amino-acid chain; its full sequence is Transcription cofactor vestigial-like protein 3 (326 aa).

Positions 54–82 (SLEVTLPSKQEEEEEEEEDEEEEEKDQPA) are disordered. A Glycyl lysine isopeptide (Lys-Gly) (interchain with G-Cter in SUMO2) cross-link involves residue Lys-62. Residues 64-78 (EEEEEEEEDEEEEEK) show a composition bias toward acidic residues. Lys-129 participates in a covalent cross-link: Glycyl lysine isopeptide (Lys-Gly) (interchain with G-Cter in SUMO2). Positions 184–208 (TADPNSWPGHGLHQTGPAPPPTASE) are disordered.

This sequence belongs to the vestigial family.

It localises to the nucleus. Its function is as follows. May act as a specific coactivator for the mammalian TEFs. The protein is Transcription cofactor vestigial-like protein 3 of Mus musculus (Mouse).